Here is a 261-residue protein sequence, read N- to C-terminus: Flagellar L-ring protein (261 aa).

A signal peptide spans 1-18 (MAAMKRLLASSLLILLSG). C19 carries the N-palmitoyl cysteine lipid modification. C19 carries S-diacylglycerol cysteine lipidation. The tract at residues 37–67 (TVDAVEGDKSESNSGLTDALRNRTDPVAGDP) is disordered.

This sequence belongs to the FlgH family. In terms of assembly, the basal body constitutes a major portion of the flagellar organelle and consists of four rings (L,P,S, and M) mounted on a central rod.

The protein localises to the cell outer membrane. The protein resides in the bacterial flagellum basal body. Functionally, assembles around the rod to form the L-ring and probably protects the motor/basal body from shearing forces during rotation. The sequence is that of Flagellar L-ring protein from Vibrio cholerae serotype O1 (strain ATCC 39541 / Classical Ogawa 395 / O395).